The following is a 39-amino-acid chain: Photosystem II reaction center protein L (39 aa).

Residues 16-37 traverse the membrane as a helical segment; the sequence is RTSLYLGLLLVAVLGILFSSYF.

The protein belongs to the PsbL family. PSII is composed of 1 copy each of membrane proteins PsbA, PsbB, PsbC, PsbD, PsbE, PsbF, PsbH, PsbI, PsbJ, PsbK, PsbL, PsbM, PsbT, PsbX, PsbY, PsbZ, Psb30/Ycf12, peripheral proteins PsbO, CyanoQ (PsbQ), PsbU, PsbV and a large number of cofactors. It forms dimeric complexes.

It is found in the cellular thylakoid membrane. One of the components of the core complex of photosystem II (PSII). PSII is a light-driven water:plastoquinone oxidoreductase that uses light energy to abstract electrons from H(2)O, generating O(2) and a proton gradient subsequently used for ATP formation. It consists of a core antenna complex that captures photons, and an electron transfer chain that converts photonic excitation into a charge separation. This subunit is found at the monomer-monomer interface and is required for correct PSII assembly and/or dimerization. Required for PSII activity, at least in part due to its effects on PSII assembly. May make specific contact(s) with lipids. This Synechocystis sp. (strain ATCC 27184 / PCC 6803 / Kazusa) protein is Photosystem II reaction center protein L.